Reading from the N-terminus, the 310-residue chain is uncharacterized protein (310 aa).

2 disordered regions span residues 22 to 163 and 178 to 209; these read LARQ…PVEH and EAEA…VEGD. Basic and acidic residues-rich tracts occupy residues 56-66 and 183-197; these read IIRDDHHHAGP and TEVR…ERHA. Positions 198-209 are enriched in low complexity; that stretch reads AAAAAGTDVEGD. 3 consecutive transmembrane segments (helical) span residues 231 to 251, 257 to 277, and 286 to 306; these read ALVV…FIAF, WNSI…VVSV, and IAST…PLAL.

It to M.leprae ML2433.

Its subcellular location is the cell membrane. This is an uncharacterized protein from Mycobacterium tuberculosis (strain CDC 1551 / Oshkosh).